Reading from the N-terminus, the 311-residue chain is Beta-ketoacyl-[acyl-carrier-protein] synthase III (311 aa).

Residues cysteine 114 and histidine 238 contribute to the active site. The tract at residues 239-243 (QANIR) is ACP-binding. Asparagine 268 is an active-site residue.

This sequence belongs to the thiolase-like superfamily. FabH family. Homodimer.

It is found in the cytoplasm. The catalysed reaction is malonyl-[ACP] + acetyl-CoA + H(+) = 3-oxobutanoyl-[ACP] + CO2 + CoA. Its pathway is lipid metabolism; fatty acid biosynthesis. In terms of biological role, catalyzes the condensation reaction of fatty acid synthesis by the addition to an acyl acceptor of two carbons from malonyl-ACP. Catalyzes the first condensation reaction which initiates fatty acid synthesis and may therefore play a role in governing the total rate of fatty acid production. Possesses both acetoacetyl-ACP synthase and acetyl transacylase activities. Its substrate specificity determines the biosynthesis of branched-chain and/or straight-chain of fatty acids. The polypeptide is Beta-ketoacyl-[acyl-carrier-protein] synthase III (Neorickettsia sennetsu (strain ATCC VR-367 / Miyayama) (Ehrlichia sennetsu)).